The chain runs to 287 residues: Thioredoxin-related transmembrane protein 2 (287 aa).

The first 35 residues, 1-35 (MAVLAPLLAFLYAVPGLLRWVSQPYYLLSALLSVS), serve as a signal peptide directing secretion. The Extracellular portion of the chain corresponds to 36–112 (FLLVRKVPPV…ILFFRLDLRM (77 aa)). The helical transmembrane segment at 113 to 133 (GLLYITLCIVFLMTCKPPLYL) threads the bilayer. Residues 134–287 (GPEHIKYFSD…NEYNDSKKDQ (154 aa)) lie on the Cytoplasmic side of the membrane. The Thioredoxin domain maps to 135 to 269 (PEHIKYFSDK…LYQKAKKIRK (135 aa)). The Di-lysine motif motif lies at 284 to 287 (KKDQ).

As to quaternary structure, monomer. Homodimer; disulfide-linked. Occurs in both reduced and oxidized monomeric form. Oxidative conditions increase homodimerization.

The protein localises to the endoplasmic reticulum membrane. Its subcellular location is the mitochondrion membrane. Functionally, endoplasmic reticulum and mitochondria-associated protein that probably functions as a regulator of cellular redox state and thereby regulates protein post-translational modification, protein folding and mitochondrial activity. The protein is Thioredoxin-related transmembrane protein 2 (tmx2) of Xenopus tropicalis (Western clawed frog).